Reading from the N-terminus, the 619-residue chain is Trihelix transcription factor GTL2 (619 aa).

2 disordered regions span residues 11–41 (HRFI…VSFS) and 62–100 (HHHH…HHHH). Pro residues predominate over residues 16–27 (SPPPPPPLPPHQ). Residues 102 to 154 (PWCSDEVLALLRFRSTVENWFPEFTWEHTSRKLAEVGFKRSPQECKEKFEEEE) form the Myb-like 1 domain. A coiled-coil region spans residues 307–361 (VRNMIAQQEEMHKKLLEDMVKKEEEKIAREEAWKKQEIERVNKEVEIRAQEQAMA). 2 disordered regions span residues 382–414 (VVQN…SSLL) and 434–458 (STKT…DLGK). The segment covering 384–396 (QNPTSPSQDSSSL) has biased composition (polar residues). Positions 435 to 444 (TKTLKPKNQN) are enriched in low complexity. Residues 448–458 (PKSDDKSDLGK) are compositionally biased toward basic and acidic residues. The Myb-like 2 domain maps to 459-526 (RWPKDEVLAL…RCKEKWENIN (68 aa)). Residues 503-510 (SKKMLEIG) carry the Nuclear localization signal motif. A disordered region spans residues 557-619 (SQPPTGTTAT…VQFSGFDLEF (63 aa)). The segment covering 561–574 (TGTTATTATTATSA) has biased composition (low complexity). A compositionally biased stretch (basic and acidic residues) spans 575–585 (RDLDTRPEENR).

It is found in the nucleus. Its function is as follows. Probable transcription factor that binds specific DNA sequence. This Arabidopsis thaliana (Mouse-ear cress) protein is Trihelix transcription factor GTL2.